Here is a 246-residue protein sequence, read N- to C-terminus: 5-oxoprolinase subunit A (246 aa).

This sequence belongs to the LamB/PxpA family. In terms of assembly, forms a complex composed of PxpA, PxpB and PxpC.

The enzyme catalyses 5-oxo-L-proline + ATP + 2 H2O = L-glutamate + ADP + phosphate + H(+). Catalyzes the cleavage of 5-oxoproline to form L-glutamate coupled to the hydrolysis of ATP to ADP and inorganic phosphate. This chain is 5-oxoprolinase subunit A, found in Cupriavidus pinatubonensis (strain JMP 134 / LMG 1197) (Cupriavidus necator (strain JMP 134)).